The sequence spans 1059 residues: Kinesin-like protein KIN-7K, chloroplastic (1059 aa).

2 stretches are compositionally biased toward low complexity: residues 1 to 35 (MSSR…SAGS) and 43 to 58 (PRSY…SSHF). The N-terminal 48 residues, 1 to 48 (MSSRPSSSASSRRSSSPFSAGSRRPPTSSSSSAGSYLTGRLMPRSYST), are a transit peptide targeting the chloroplast. Residues 1 to 99 (MSSRPSSSAS…SPPSPVPFPS (99 aa)) are disordered. Residues 59–69 (FGGGGGSGGGS) show a composition bias toward gly residues. A compositionally biased stretch (low complexity) spans 70–87 (RSTTPGRRGSSSSSLVGP). The span at 88-97 (VPSPPSPVPF) shows a compositional bias: pro residues. The Kinesin motor domain maps to 114-431 (SISVTIRFRP…LKFASRAKRV (318 aa)). 194 to 201 (GVTSSGKT) serves as a coordination point for ATP. A coiled-coil region spans residues 435-518 (AARNRMIDEK…IQRLTKLILV (84 aa)). The segment at 526 to 570 (ALTDTSSHQRHNSVNEEDKVSTSQDSSMLVQNDSATKDSLSSASP) is disordered. Polar residues predominate over residues 546 to 569 (STSQDSSMLVQNDSATKDSLSSAS). 3 coiled-coil regions span residues 640–674 (EGTK…GEAS), 700–781 (ELEL…EENR), and 862–910 (LEDM…LEND). The RING-type zinc-finger motif lies at 1013-1048 (CKVCFESATAAVLLPCRHFCLCKPCSLACSECPLCR).

Belongs to the TRAFAC class myosin-kinesin ATPase superfamily. Kinesin family. KIN-7 subfamily.

The protein localises to the plastid. Its subcellular location is the chloroplast. The protein is Kinesin-like protein KIN-7K, chloroplastic of Oryza sativa subsp. japonica (Rice).